A 268-amino-acid chain; its full sequence is HLA class II histocompatibility antigen, DQ beta 2 chain (268 aa).

An N-terminal signal peptide occupies residues Met-1–Ala-32. The interval Arg-33–Val-126 is beta-1. The Extracellular segment spans residues Arg-33–Lys-229. 2 disulfides stabilise this stretch: Cys-47–Cys-110 and Cys-148–Cys-204. N-linked (GlcNAc...) asparagine glycosylation occurs at Asn-51. A beta-2 region spans residues Glu-127 to Lys-229. Residues Pro-128 to Thr-216 form the Ig-like C1-type domain. The chain crosses the membrane as a helical span at residues Met-230–Ile-250. Topologically, residues Arg-251–His-268 are cytoplasmic.

This sequence belongs to the MHC class II family. As to quaternary structure, heterodimer of an alpha and a beta subunit; also referred as MHC class II molecule. Dimer formation with HLA-DQA2, but not with HLA-DQA1, is required for efficient exit from the endoplasmic reticulum (ER). In the ER, forms a heterononamer; 3 MHC class II molecules bind to a CD74 homotrimer (also known as invariant chain or HLA class II histocompatibility antigen gamma chain). In the endosomal/lysosomal system; CD74 undergoes sequential degradation by various proteases; leaving a small fragment termed CLIP on each MHC class II molecule. MHC class II molecule interacts with HLA_DM, and HLA_DO in B-cells, in order to release CLIP and facilitate the binding of antigenic peptides. Association with HLA-DMA also occurs in skin Langerhans cells, in post-Golgi compartments. Restricted to skin Langerhans cells (at protein level).

The protein resides in the cell membrane. Its subcellular location is the endoplasmic reticulum membrane. It localises to the golgi apparatus. It is found in the trans-Golgi network membrane. The protein localises to the endosome membrane. The protein resides in the lysosome membrane. Functionally, binds peptides derived from antigens that access the endocytic route of antigen presenting cells (APC) and presents them on the cell surface for recognition by the CD4 T-cells. The peptide binding cleft accommodates peptides of 10-30 residues. The peptides presented by MHC class II molecules are generated mostly by degradation of proteins that access the endocytic route, where they are processed by lysosomal proteases and other hydrolases. Exogenous antigens that have been endocytosed by the APC are thus readily available for presentation via MHC II molecules, and for this reason this antigen presentation pathway is usually referred to as exogenous. As membrane proteins on their way to degradation in lysosomes as part of their normal turn-over are also contained in the endosomal/lysosomal compartments, exogenous antigens must compete with those derived from endogenous components. Autophagy is also a source of endogenous peptides, autophagosomes constitutively fuse with MHC class II loading compartments. In addition to APCs, other cells of the gastrointestinal tract, such as epithelial cells, express MHC class II molecules and CD74 and act as APCs, which is an unusual trait of the GI tract. To produce a MHC class II molecule that presents an antigen, three MHC class II molecules (heterodimers of an alpha and a beta chain) associate with a CD74 trimer in the ER to form a heterononamer. Soon after the entry of this complex into the endosomal/lysosomal system where antigen processing occurs, CD74 undergoes a sequential degradation by various proteases, including CTSS and CTSL, leaving a small fragment termed CLIP (class-II-associated invariant chain peptide). The removal of CLIP is facilitated by HLA-DM via direct binding to the alpha-beta-CLIP complex so that CLIP is released. HLA-DM stabilizes MHC class II molecules until primary high affinity antigenic peptides are bound. The MHC II molecule bound to a peptide is then transported to the cell membrane surface. In B-cells, the interaction between HLA-DM and MHC class II molecules is regulated by HLA-DO. Primary dendritic cells (DCs) also to express HLA-DO. Lysosomal microenvironment has been implicated in the regulation of antigen loading into MHC II molecules, increased acidification produces increased proteolysis and efficient peptide loading. The chain is HLA class II histocompatibility antigen, DQ beta 2 chain (HLA-DQB2) from Homo sapiens (Human).